The sequence spans 183 residues: Inner membrane-spanning protein YciB (183 aa).

5 helical membrane-spanning segments follow: residues 22 to 44 (IYTA…WVRY), 54 to 74 (TFLL…DAFI), 76 to 96 (WKVT…RYGF), 119 to 139 (VNLA…YVAF), and 149 to 169 (FKVF…GVYL).

This sequence belongs to the YciB family.

It is found in the cell inner membrane. Functionally, plays a role in cell envelope biogenesis, maintenance of cell envelope integrity and membrane homeostasis. This Aeromonas salmonicida (strain A449) protein is Inner membrane-spanning protein YciB.